Reading from the N-terminus, the 592-residue chain is Alanine aminotransferase, mitochondrial (592 aa).

Residues 1-64 (MLSLSAKNHF…RKVRPVLQRH (64 aa)) constitute a mitochondrion transit peptide. S77 carries the phosphoserine modification. Pyridoxal 5'-phosphate is bound by residues A258, S259, Y284, N340, and S409. Position 412 is an N6-(pyridoxal phosphate)lysine (K412). R421 serves as a coordination point for pyridoxal 5'-phosphate.

It belongs to the class-I pyridoxal-phosphate-dependent aminotransferase family. Alanine aminotransferase subfamily. Homodimer. The cofactor is pyridoxal 5'-phosphate.

It localises to the mitochondrion matrix. The catalysed reaction is L-alanine + 2-oxoglutarate = pyruvate + L-glutamate. It participates in amino-acid degradation; L-alanine degradation via transaminase pathway; pyruvate from L-alanine: step 1/1. Functionally, alanine aminotransferase involved in both alanine biosynthesis and utilization. Under respiratory conditions, constitutes the sole pathway for alanine biosynthesis and catabolism. Under fermentative conditions, it plays a catabolic role and alanine is mainly synthesized through an alternative pathway. The polypeptide is Alanine aminotransferase, mitochondrial (ALT1) (Saccharomyces cerevisiae (strain ATCC 204508 / S288c) (Baker's yeast)).